The primary structure comprises 218 residues: Adenylate kinase (218 aa).

10–15 (GAGKGT) is a binding site for ATP. The segment at 30-59 (STGDMLRAAVKAGSPLGLKVKDIMTSGGLV) is NMP. AMP is bound by residues Thr-31, Arg-36, 57–59 (GLV), 85–88 (GFPR), and Gln-92. Residues 122–159 (GRRVHEASGRVYHVKHNAPKTEGVDDETGEPLVQRDDD) form an LID region. ATP is bound by residues Arg-123 and 132–133 (VY). AMP is bound by residues Arg-156 and Arg-167. Gly-203 lines the ATP pocket.

It belongs to the adenylate kinase family. As to quaternary structure, monomer.

It localises to the cytoplasm. The catalysed reaction is AMP + ATP = 2 ADP. It participates in purine metabolism; AMP biosynthesis via salvage pathway; AMP from ADP: step 1/1. Its function is as follows. Catalyzes the reversible transfer of the terminal phosphate group between ATP and AMP. Plays an important role in cellular energy homeostasis and in adenine nucleotide metabolism. The protein is Adenylate kinase of Saccharophagus degradans (strain 2-40 / ATCC 43961 / DSM 17024).